A 334-amino-acid chain; its full sequence is Dual specificity mitogen-activated protein kinase kinase 6 (334 aa).

The span at 1–11 (MSQSKGKKRNP) shows a compositional bias: basic residues. A disordered region spans residues 1–34 (MSQSKGKKRNPGLKIPKEAFEQPQTSSTPPRDLD). Positions 4–19 (SKGKKRNPGLKIPKEA) are d domain. Residues 53-314 (LEPIMELGRG…YPELMQHPFF (262 aa)) enclose the Protein kinase domain. ATP is bound by residues 59-67 (LGRGAYGVV) and lysine 82. Catalysis depends on aspartate 179, which acts as the Proton acceptor. Serine 207 bears the (Microbial infection) O-acetylserine; by Yersinia YopJ; alternate mark. At serine 207 the chain carries Phosphoserine; by MAP3K; alternate. Threonine 211 carries the (Microbial infection) O-acetylthreonine; by Yersinia YopJ; alternate modification. Threonine 211 carries the phosphothreonine; by MAP3K; alternate modification. The tract at residues 311 to 334 (HPFFTLHESKGTDVASFVKLILGD) is DVD domain.

Belongs to the protein kinase superfamily. STE Ser/Thr protein kinase family. MAP kinase kinase subfamily. Dimer. Interacts (via its D domain) with its substrates MAPK11, MAPK12, MAPK13 and MAPK14. Interacts (via its DVD domain) with MAP3Ks activators like MAP3K5/ASK1, MAP3K1/MEKK1, MAP3K2/MEKK2, MAP3K3/MEKK3, MAP3K4/MEKK4, MAP3K7/TAK1, MAP3K11/MLK3 and MAP3K17/TAOK2. Interacts with DCTN1. Interacts with EIF2AK2/PKR. As to quaternary structure, (Microbial infection) Interacts with Yersinia YopJ. Weakly autophosphorylated. Phosphorylated at Ser-207 and Thr-211 by the majority of M3Ks, such as MAP3K5/ASK1, MAP3K1/MEKK1, MAP3K2/MEKK2, MAP3K3/MEKK3, MAP3K4/MEKK4, MAP3K7/TAK1, MAP3K11/MLK3 and MAP3K17/TAOK2. In terms of processing, in response to genotoxic stress, MAP3K-phosphorylated MAP2K6 is ubiquitinated and degraded by the SCF(FBXO31) complex. Post-translationally, (Microbial infection) Acetylation of Ser-207 and Thr-211 by Yersinia YopJ prevents phosphorylation and activation, thus blocking the MAPK signaling pathway. In terms of tissue distribution, isoform 2 is only expressed in skeletal muscle. Isoform 1 is expressed in skeletal muscle, heart, and in lesser extent in liver or pancreas.

Its subcellular location is the nucleus. It is found in the cytoplasm. The protein resides in the cytoskeleton. It catalyses the reaction L-seryl-[protein] + ATP = O-phospho-L-seryl-[protein] + ADP + H(+). The enzyme catalyses L-threonyl-[protein] + ATP = O-phospho-L-threonyl-[protein] + ADP + H(+). The catalysed reaction is L-tyrosyl-[protein] + ATP = O-phospho-L-tyrosyl-[protein] + ADP + H(+). Activated by dual phosphorylation on Ser-207 and Thr-211 in response to a variety of cellular stresses, including UV radiation, osmotic shock, hypoxia, inflammatory cytokines, interferon gamma (IFNG), and less often by growth factors. MAP2K6/MKK6 is activated by the majority of M3Ks, such as MAP3K5/ASK1, MAP3K1/MEKK1, MAP3K2/MEKK2, MAP3K3/MEKK3, MAP3K4/MEKK4, MAP3K7/TAK1, MAP3K11/MLK3 and MAP3K17/TAOK2. In terms of biological role, dual specificity protein kinase which acts as an essential component of the MAP kinase signal transduction pathway. With MAP3K3/MKK3, catalyzes the concomitant phosphorylation of a threonine and a tyrosine residue in the MAP kinases p38 MAPK11, MAPK12, MAPK13 and MAPK14 and plays an important role in the regulation of cellular responses to cytokines and all kinds of stresses. Especially, MAP2K3/MKK3 and MAP2K6/MKK6 are both essential for the activation of MAPK11 and MAPK13 induced by environmental stress, whereas MAP2K6/MKK6 is the major MAPK11 activator in response to TNF. MAP2K6/MKK6 also phosphorylates and activates PAK6. The p38 MAP kinase signal transduction pathway leads to direct activation of transcription factors. Nuclear targets of p38 MAP kinase include the transcription factors ATF2 and ELK1. Within the p38 MAPK signal transduction pathway, MAP3K6/MKK6 mediates phosphorylation of STAT4 through MAPK14 activation, and is therefore required for STAT4 activation and STAT4-regulated gene expression in response to IL-12 stimulation. The pathway is also crucial for IL-6-induced SOCS3 expression and down-regulation of IL-6-mediated gene induction; and for IFNG-dependent gene transcription. Has a role in osteoclast differentiation through NF-kappa-B transactivation by TNFSF11, and in endochondral ossification and since SOX9 is another likely downstream target of the p38 MAPK pathway. MAP2K6/MKK6 mediates apoptotic cell death in thymocytes. Acts also as a regulator for melanocytes dendricity, through the modulation of Rho family GTPases. The sequence is that of Dual specificity mitogen-activated protein kinase kinase 6 (MAP2K6) from Homo sapiens (Human).